The primary structure comprises 749 residues: Protein kinase domain-containing protein ppk32 (749 aa).

Positions 21 to 317 (IQKENSVQVG…MFELERSPYF (297 aa)) constitute a Protein kinase domain. 2 disordered regions span residues 598 to 677 (KKLQ…VTAK) and 706 to 749 (PLIP…KSLL). A compositionally biased stretch (polar residues) spans 602–651 (SKPSSVVPNRITTDPFSSQTKEATSKPSSISPNKATTNIFTSQASLSSQG). Ser-632 is modified (phosphoserine). Composition is skewed to low complexity over residues 657–670 (SSASSYRSYSQRAS) and 721–735 (NRRVTTPVVNQNTVT).

It localises to the cytoplasm. The polypeptide is Protein kinase domain-containing protein ppk32 (ppk32) (Schizosaccharomyces pombe (strain 972 / ATCC 24843) (Fission yeast)).